The following is a 225-amino-acid chain: Lipid A 4'-phosphatase (225 aa).

Helical transmembrane passes span 29–49 (SAFT…YILL), 51–71 (NFHW…ITFA), 110–130 (FGFP…LICL), 136–156 (LSIF…YLGL), 160–180 (GDLV…YFIA), and 203–223 (TEVM…YSIV).

This sequence belongs to the lipid A LpxF 4'-phosphatase family.

The protein localises to the cell inner membrane. It functions in the pathway bacterial outer membrane biogenesis; LPS lipid A biosynthesis. In terms of biological role, probably removes the 4'-phosphate group from lipid A. Removal of this phosphate group confers resistance to cationic antimicrobial peptides (CAMPs), inflammation-associated peptides produced by the human host. This LPS modification helps maintain the stability of this commensal bacterium in gut microbiota. The sequence is that of Lipid A 4'-phosphatase from Bacteroides thetaiotaomicron (strain ATCC 29148 / DSM 2079 / JCM 5827 / CCUG 10774 / NCTC 10582 / VPI-5482 / E50).